We begin with the raw amino-acid sequence, 237 residues long: Protein GrpE (237 aa).

2 disordered regions span residues 1–52 and 200–237; these read MSGD…RLQQ and KVSMGPGPQSGASPSSAQSNDDSTATFQGEADPAEPGV. Positions 27–40 are enriched in polar residues; it reads ASMNSDEGQPSAQS. The span at 204–218 shows a compositional bias: low complexity; sequence GPGPQSGASPSSAQS.

It belongs to the GrpE family. In terms of assembly, homodimer.

Its subcellular location is the cytoplasm. Functionally, participates actively in the response to hyperosmotic and heat shock by preventing the aggregation of stress-denatured proteins, in association with DnaK and GrpE. It is the nucleotide exchange factor for DnaK and may function as a thermosensor. Unfolded proteins bind initially to DnaJ; upon interaction with the DnaJ-bound protein, DnaK hydrolyzes its bound ATP, resulting in the formation of a stable complex. GrpE releases ADP from DnaK; ATP binding to DnaK triggers the release of the substrate protein, thus completing the reaction cycle. Several rounds of ATP-dependent interactions between DnaJ, DnaK and GrpE are required for fully efficient folding. The polypeptide is Protein GrpE (Prochlorococcus marinus (strain MIT 9303)).